The chain runs to 120 residues: Small ribosomal subunit protein eS17 (120 aa).

Belongs to the eukaryotic ribosomal protein eS17 family. As to quaternary structure, component of the small ribosomal subunit.

The protein localises to the cytoplasm. The polypeptide is Small ribosomal subunit protein eS17 (RPS17) (Encephalitozoon cuniculi (strain GB-M1) (Microsporidian parasite)).